The primary structure comprises 127 residues: UPF0325 protein VV1_1856 (127 aa).

It belongs to the UPF0325 family.

This chain is UPF0325 protein VV1_1856, found in Vibrio vulnificus (strain CMCP6).